Here is a 338-residue protein sequence, read N- to C-terminus: Serine/threonine-protein kinase YabT (338 aa).

Positions 28 to 286 (YTLRKQLGKG…PIKASPQPAT (259 aa)) constitute a Protein kinase domain. Residues 34–42 (LGKGANGIV) and Lys55 each bind ATP. Residue Asp148 is the Proton acceptor of the active site. Residues 266–312 (DAGQKAAQRKQPIKASPQPATRQRQQKPRQGKITKTRYTPKQKPAKS) are disordered. Over residues 289–309 (RQQKPRQGKITKTRYTPKQKP) the composition is skewed to basic residues.

The protein belongs to the protein kinase superfamily. Ser/Thr protein kinase family. Post-translationally, autophosphorylated.

It catalyses the reaction L-seryl-[protein] + ATP = O-phospho-L-seryl-[protein] + ADP + H(+). The enzyme catalyses L-threonyl-[protein] + ATP = O-phospho-L-threonyl-[protein] + ADP + H(+). In terms of biological role, plays a role in the cell's commitment to sporulation; phosphorylates DNA replication initiation-control protein YabA. Deletion of this kinase delays entry into sporulation but does not affect final spore yield. Overexpression decreases biofilm formation; phosphorylation of YabA probably prevents biofilm formation. The sequence is that of Serine/threonine-protein kinase YabT (yabT) from Bacillus subtilis (strain 168).